The chain runs to 828 residues: DNA gyrase subunit A (828 aa).

A Topo IIA-type catalytic domain is found at 32–497; that stretch reads LPDVRDGLKP…EVLSLEDEDL (466 aa). Residue Tyr120 is the O-(5'-phospho-DNA)-tyrosine intermediate of the active site. Residues 524-530 carry the GyrA-box motif; the sequence is QKRGGRG.

This sequence belongs to the type II topoisomerase GyrA/ParC subunit family. As to quaternary structure, heterotetramer, composed of two GyrA and two GyrB chains. In the heterotetramer, GyrA contains the active site tyrosine that forms a transient covalent intermediate with DNA, while GyrB binds cofactors and catalyzes ATP hydrolysis.

It localises to the cytoplasm. The catalysed reaction is ATP-dependent breakage, passage and rejoining of double-stranded DNA.. A type II topoisomerase that negatively supercoils closed circular double-stranded (ds) DNA in an ATP-dependent manner to modulate DNA topology and maintain chromosomes in an underwound state. Negative supercoiling favors strand separation, and DNA replication, transcription, recombination and repair, all of which involve strand separation. Also able to catalyze the interconversion of other topological isomers of dsDNA rings, including catenanes and knotted rings. Type II topoisomerases break and join 2 DNA strands simultaneously in an ATP-dependent manner. The chain is DNA gyrase subunit A from Streptococcus pyogenes serotype M3 (strain ATCC BAA-595 / MGAS315).